We begin with the raw amino-acid sequence, 270 residues long: MIIKLYKIEPTSTLTRNGTSQAKPKNLISGKRNCGKGRNANGIITIRHRGGGHKRLCRKINFKRNEKDISGKIKTIEYDPNRNAYICLIHYVNGEKWYILHPRGALIGDTIISGPEVSIKIGNSLPLNEIPLGTSLHNLEITRGKGGQLARAAGAAAKLIAKEGQSATLKLPSGELRFISKQCSATVGQVGNIGVNQKSLGKAGVKRWLGKRPIVRGLVMNPIDHPHGGGEGRAPIGRNQPKTPWGYPALGKKTRRKNKYSNKFILRHRM.

The tract at residues 221-245 is disordered; it reads NPIDHPHGGGEGRAPIGRNQPKTPW.

This sequence belongs to the universal ribosomal protein uL2 family. In terms of assembly, part of the 50S ribosomal subunit.

It is found in the plastid. The protein is Large ribosomal subunit protein uL2c (rpl2) of Cuscuta gronovii (Common dodder).